The primary structure comprises 554 residues: Glutamine--tRNA ligase (554 aa).

Residues proline 33–histidine 43 carry the 'HIGH' region motif. ATP is bound by residues glutamate 34–asparagine 36 and histidine 40–serine 46. Residues aspartate 66 and tyrosine 210 each coordinate L-glutamine. ATP contacts are provided by residues threonine 229, arginine 259 to leucine 260, and methionine 267 to lysine 269. The 'KMSKS' region signature appears at valine 266–arginine 270.

It belongs to the class-I aminoacyl-tRNA synthetase family. In terms of assembly, monomer.

It is found in the cytoplasm. The enzyme catalyses tRNA(Gln) + L-glutamine + ATP = L-glutaminyl-tRNA(Gln) + AMP + diphosphate. The protein is Glutamine--tRNA ligase of Clostridioides difficile (strain 630) (Peptoclostridium difficile).